Here is a 397-residue protein sequence, read N- to C-terminus: MSAAIYLVKGREKSVVRRHPWIFSRGIDRVEGNPQLGETVDVYGHDGKWLAKAAYSPESQIRARVWSFEKQDVNRAFFVKRIQDAQLLREDVIERDGLTGYRLIAAESDGMPGVTIDRYQNFFVCQLLSAGAEHQKQNIVDALIEVFPDCNVYERSDVSVRKKEGLQETTGVLHGEMPPKSVVIEENGVKISVDIVGGHKTGFYLDQRDSRQQAMKYVKDKEVLNCFSYTGGFGLYALKGGAKRVINADVSQPALDTAKFNAELNEFDISKKRAVFLNADVFKLLREYRDQGTKFDVVIMDPPKFAESKAQLNGACRGYKDINMLAMQILKPGGTLLTYSCSGLMDQVLFQKIIADAAVDAGRSVKFVERFEQAADHPTDTAYPEGFYLKGFACKVL.

The region spanning 2–80 (SAAIYLVKGR…QDVNRAFFVK (79 aa)) is the PUA domain.

It belongs to the methyltransferase superfamily. RlmI family.

It localises to the cytoplasm. The enzyme catalyses cytidine(1962) in 23S rRNA + S-adenosyl-L-methionine = 5-methylcytidine(1962) in 23S rRNA + S-adenosyl-L-homocysteine + H(+). In terms of biological role, specifically methylates the cytosine at position 1962 (m5C1962) of 23S rRNA. The protein is Ribosomal RNA large subunit methyltransferase I of Vibrio vulnificus (strain YJ016).